A 261-amino-acid chain; its full sequence is Hemin import ATP-binding protein HmuV (261 aa).

The 237-residue stretch at 7-243 (LRGQNLSLQF…EIIDAVYGYK (237 aa)) folds into the ABC transporter domain. 39–46 (GPNGAGKS) lines the ATP pocket.

Belongs to the ABC transporter superfamily. Heme (hemin) importer (TC 3.A.1.14.5) family. As to quaternary structure, the complex is composed of two ATP-binding proteins (HmuV), two transmembrane proteins (HmuU) and a solute-binding protein (HmuT).

The protein resides in the cell inner membrane. Its function is as follows. Part of the ABC transporter complex HmuTUV involved in hemin import. Responsible for energy coupling to the transport system. In Vibrio vulnificus (strain CMCP6), this protein is Hemin import ATP-binding protein HmuV.